Consider the following 366-residue polypeptide: UDP-N-acetylglucosamine--N-acetylmuramyl-(pentapeptide) pyrophosphoryl-undecaprenol N-acetylglucosamine transferase (366 aa).

UDP-N-acetyl-alpha-D-glucosamine is bound by residues 17–19 (TGG), Asn129, Arg169, Ser195, Ile251, 270–275 (ALTVSE), and Gln296.

The protein belongs to the glycosyltransferase 28 family. MurG subfamily.

The protein resides in the cell inner membrane. It catalyses the reaction di-trans,octa-cis-undecaprenyl diphospho-N-acetyl-alpha-D-muramoyl-L-alanyl-D-glutamyl-meso-2,6-diaminopimeloyl-D-alanyl-D-alanine + UDP-N-acetyl-alpha-D-glucosamine = di-trans,octa-cis-undecaprenyl diphospho-[N-acetyl-alpha-D-glucosaminyl-(1-&gt;4)]-N-acetyl-alpha-D-muramoyl-L-alanyl-D-glutamyl-meso-2,6-diaminopimeloyl-D-alanyl-D-alanine + UDP + H(+). It participates in cell wall biogenesis; peptidoglycan biosynthesis. In terms of biological role, cell wall formation. Catalyzes the transfer of a GlcNAc subunit on undecaprenyl-pyrophosphoryl-MurNAc-pentapeptide (lipid intermediate I) to form undecaprenyl-pyrophosphoryl-MurNAc-(pentapeptide)GlcNAc (lipid intermediate II). This chain is UDP-N-acetylglucosamine--N-acetylmuramyl-(pentapeptide) pyrophosphoryl-undecaprenol N-acetylglucosamine transferase, found in Shewanella denitrificans (strain OS217 / ATCC BAA-1090 / DSM 15013).